Consider the following 97-residue polypeptide: Small ribosomal subunit protein bS20 (97 aa).

Residues Arg76 to Gly85 are compositionally biased toward basic residues. The disordered stretch occupies residues Arg76–Ser97. Residues Leu86–Ser97 are compositionally biased toward low complexity.

This sequence belongs to the bacterial ribosomal protein bS20 family.

Its function is as follows. Binds directly to 16S ribosomal RNA. This chain is Small ribosomal subunit protein bS20, found in Microcystis aeruginosa (strain NIES-843 / IAM M-2473).